Consider the following 179-residue polypeptide: ATP synthase subunit b, chloroplastic (179 aa).

The chain crosses the membrane as a helical span at residues 35 to 51; sequence IVILGGGIFKLGSTALS.

Belongs to the ATPase B chain family. F-type ATPases have 2 components, F(1) - the catalytic core - and F(0) - the membrane proton channel. F(1) has five subunits: alpha(3), beta(3), gamma(1), delta(1), epsilon(1). F(0) has four main subunits: a(1), b(1), b'(1) and c(10-14). The alpha and beta chains form an alternating ring which encloses part of the gamma chain. F(1) is attached to F(0) by a central stalk formed by the gamma and epsilon chains, while a peripheral stalk is formed by the delta, b and b' chains.

It localises to the plastid. The protein localises to the chloroplast thylakoid membrane. F(1)F(0) ATP synthase produces ATP from ADP in the presence of a proton or sodium gradient. F-type ATPases consist of two structural domains, F(1) containing the extramembraneous catalytic core and F(0) containing the membrane proton channel, linked together by a central stalk and a peripheral stalk. During catalysis, ATP synthesis in the catalytic domain of F(1) is coupled via a rotary mechanism of the central stalk subunits to proton translocation. In terms of biological role, component of the F(0) channel, it forms part of the peripheral stalk, linking F(1) to F(0). In Emiliania huxleyi (Coccolithophore), this protein is ATP synthase subunit b, chloroplastic.